Reading from the N-terminus, the 286-residue chain is Beta-lactamase SHV-13 (286 aa).

Positions 1-21 (MRYIRLCIISLLATLPLAVHA) are cleaved as a signal peptide. S66 serves as the catalytic Acyl-ester intermediate. C73 and C119 are joined by a disulfide. Residue E164 is the Proton acceptor of the active site. Residue 230–232 (KTG) coordinates substrate.

This sequence belongs to the class-A beta-lactamase family.

The catalysed reaction is a beta-lactam + H2O = a substituted beta-amino acid. Inhibited 16-fold better by the beta-lactamase inhibitor clavulanic acid than by tazobactam. Its function is as follows. Broad spectrum beta-lactamase which hydrolyzes penicillins, as well as cephalosporins except cephamycins. Also hydrolyzes aztreonam, but not imipenem. Confers highly resistance to ceftazidime, cefotaxime, aztreonam and piperacillin. The sequence is that of Beta-lactamase SHV-13 (bla) from Klebsiella pneumoniae.